Consider the following 443-residue polypeptide: MDAWSRSLERLEAEFPPEDVHTWLKPLQADLRVDSLVLYAPNAFIVDQVRELYLARIRELLAHFAGFSDVFLEIGSRPRPVEAQNAPFSTPSAHVSSEPQVPFAGNLDNHYTFANFVEGRSNQLGLAAAFQAAQKPGDRAHNPLLLYGGTGLGKTHLMFAAGNAMRQANPGAKVLYLRSEQFFSAMIRALQEKTMDQFKRQFQQVDALLIDDIQFFAGKDRTQEEFFHTFNALFDGKQQIILTCDRYPREVEGLEARLKSRLAWGLSVAIEPPDFETRAAIVLAKARERGAEIPDDVAFLIAKKMRSNVRDLEGALNTLTARANFTGRAITTEFAQETLRDLLRAQQQAISIPNIQKTVADYYGLQIKDLLSKRRTRSLARPRQVAMALTKELTEHSLPEIGDAFAGRDHTTVLHACRQIRTLMEADGKLREDWDKLIRKLSE.

A domain I, interacts with DnaA modulators region spans residues 1 to 67; the sequence is MDAWSRSLER…RELLAHFAGF (67 aa). The tract at residues 67–105 is domain II; it reads FSDVFLEIGSRPRPVEAQNAPFSTPSAHVSSEPQVPFAG. Residues 106 to 323 are domain III, AAA+ region; that stretch reads NLDNHYTFAN…GALNTLTARA (218 aa). ATP is bound by residues Gly-151, Gly-153, Lys-154, and Thr-155. Residues 324–443 are domain IV, binds dsDNA; it reads NFTGRAITTE…WDKLIRKLSE (120 aa).

Belongs to the DnaA family. Oligomerizes as a right-handed, spiral filament on DNA at oriC.

It is found in the cytoplasm. Its function is as follows. Plays an essential role in the initiation and regulation of chromosomal replication. ATP-DnaA binds to the origin of replication (oriC) to initiate formation of the DNA replication initiation complex once per cell cycle. Binds the DnaA box (a 9 base pair repeat at the origin) and separates the double-stranded (ds)DNA. Forms a right-handed helical filament on oriC DNA; dsDNA binds to the exterior of the filament while single-stranded (ss)DNA is stabiized in the filament's interior. The ATP-DnaA-oriC complex binds and stabilizes one strand of the AT-rich DNA unwinding element (DUE), permitting loading of DNA polymerase. After initiation quickly degrades to an ADP-DnaA complex that is not apt for DNA replication. Binds acidic phospholipids. This is Chromosomal replication initiator protein DnaA from Stenotrophomonas maltophilia (strain R551-3).